Here is a 264-residue protein sequence, read N- to C-terminus: THAP domain-containing protein 10 (264 aa).

The THAP-type zinc finger occupies 1-90 (MPARCVAAHC…LVAGAVPTLH (90 aa)). Disordered stretches follow at residues 90 to 136 (HRVP…PRAG) and 160 to 195 (TQPH…KRPR). Residues 99–122 (GGEEGDQAGRPDTRGELQAARHSE) are compositionally biased toward basic and acidic residues. Over residues 160-175 (TQPHADNPSNTVTSVP) the composition is skewed to polar residues.

This Pongo abelii (Sumatran orangutan) protein is THAP domain-containing protein 10 (THAP10).